The sequence spans 87 residues: MKFRLGGFEAIKSAYMAQVQYSMWVTRKDAWYFANYDPRMKREGLHYVVIERNEKYMASFDEMVPEFIEKMDEALAEIGFVFGEQWR.

The protein to bacteriophage lambda exonuclease exo.

This is an uncharacterized protein from Escherichia coli (strain K12).